We begin with the raw amino-acid sequence, 155 residues long: Endoribonuclease YbeY (155 aa).

H113, H117, and H123 together coordinate Zn(2+).

Belongs to the endoribonuclease YbeY family. It depends on Zn(2+) as a cofactor.

The protein localises to the cytoplasm. Its function is as follows. Single strand-specific metallo-endoribonuclease involved in late-stage 70S ribosome quality control and in maturation of the 3' terminus of the 16S rRNA. This chain is Endoribonuclease YbeY, found in Ureaplasma urealyticum serovar 10 (strain ATCC 33699 / Western).